We begin with the raw amino-acid sequence, 231 residues long: Large ribosomal subunit protein uL1 (231 aa).

It belongs to the universal ribosomal protein uL1 family. As to quaternary structure, part of the 50S ribosomal subunit.

Its function is as follows. Binds directly to 23S rRNA. The L1 stalk is quite mobile in the ribosome, and is involved in E site tRNA release. In terms of biological role, protein L1 is also a translational repressor protein, it controls the translation of the L11 operon by binding to its mRNA. The polypeptide is Large ribosomal subunit protein uL1 (Pseudomonas putida (strain ATCC 700007 / DSM 6899 / JCM 31910 / BCRC 17059 / LMG 24140 / F1)).